Reading from the N-terminus, the 118-residue chain is U16-barytoxin-Tl1c (118 aa).

The signal sequence occupies residues 1 to 16; it reads MKTIIVFLSFLVLVLA. The propeptide occupies 17–76; that stretch reads TKFGDANEGVNREQTKEVIQNEFRGDFLNEMAAMSLLQQLEAIESALLEKEADRNSRQKR. 3 disulfides stabilise this stretch: C77/C92, C84/C97, and C91/C112.

The protein belongs to the neurotoxin 14 (magi-1) family. 06 (ICK-Trit) subfamily. As to expression, expressed by the venom gland.

It is found in the secreted. Its function is as follows. Ion channel inhibitor. This Trittame loki (Brush-footed trapdoor spider) protein is U16-barytoxin-Tl1c.